Reading from the N-terminus, the 365-residue chain is Holliday junction branch migration complex subunit RuvB (365 aa).

Residues 1 to 10 (MAIVSSNAAS) show a composition bias toward polar residues. The segment at 1 to 48 (MAIVSSNAASQRPRPDRGPDRVPNRVVDGARQAEDDRDPGRVGAKEDS) is disordered. Basic and acidic residues-rich tracts occupy residues 13–23 (PRPDRGPDRVP) and 31–48 (RQAE…KEDS). The segment at 13–210 (PRPDRGPDRV…FGLIQRLEFY (198 aa)) is large ATPase domain (RuvB-L). ATP is bound by residues L49, R50, G91, K94, T95, T96, R200, Y210, and R247. T95 contacts Mg(2+). The tract at residues 211-282 (GLEDLQAIVE…LVDEALTLHR (72 aa)) is small ATPAse domain (RuvB-S). The head domain (RuvB-H) stretch occupies residues 285 to 365 (GRGLDASDRR…GWPYPQEQAA (81 aa)). DNA-binding residues include R340 and R345.

It belongs to the RuvB family. Homohexamer. Forms an RuvA(8)-RuvB(12)-Holliday junction (HJ) complex. HJ DNA is sandwiched between 2 RuvA tetramers; dsDNA enters through RuvA and exits via RuvB. An RuvB hexamer assembles on each DNA strand where it exits the tetramer. Each RuvB hexamer is contacted by two RuvA subunits (via domain III) on 2 adjacent RuvB subunits; this complex drives branch migration. In the full resolvosome a probable DNA-RuvA(4)-RuvB(12)-RuvC(2) complex forms which resolves the HJ.

Its subcellular location is the cytoplasm. The enzyme catalyses ATP + H2O = ADP + phosphate + H(+). In terms of biological role, the RuvA-RuvB-RuvC complex processes Holliday junction (HJ) DNA during genetic recombination and DNA repair, while the RuvA-RuvB complex plays an important role in the rescue of blocked DNA replication forks via replication fork reversal (RFR). RuvA specifically binds to HJ cruciform DNA, conferring on it an open structure. The RuvB hexamer acts as an ATP-dependent pump, pulling dsDNA into and through the RuvAB complex. RuvB forms 2 homohexamers on either side of HJ DNA bound by 1 or 2 RuvA tetramers; 4 subunits per hexamer contact DNA at a time. Coordinated motions by a converter formed by DNA-disengaged RuvB subunits stimulates ATP hydrolysis and nucleotide exchange. Immobilization of the converter enables RuvB to convert the ATP-contained energy into a lever motion, pulling 2 nucleotides of DNA out of the RuvA tetramer per ATP hydrolyzed, thus driving DNA branch migration. The RuvB motors rotate together with the DNA substrate, which together with the progressing nucleotide cycle form the mechanistic basis for DNA recombination by continuous HJ branch migration. Branch migration allows RuvC to scan DNA until it finds its consensus sequence, where it cleaves and resolves cruciform DNA. The chain is Holliday junction branch migration complex subunit RuvB from Synechococcus sp. (strain WH7803).